The following is a 426-amino-acid chain: UPF0597 protein CLD_2825 (426 aa).

Belongs to the UPF0597 family.

This chain is UPF0597 protein CLD_2825, found in Clostridium botulinum (strain Okra / Type B1).